We begin with the raw amino-acid sequence, 255 residues long: MEANSGRLASELNHVQEVLEGYKKKYEEEVALRATAENEFVALKKDVDCAYLRKSDLEANVEALTQEIDFLRRLYEEEIRVLQSHISDTSVVVKMDNSRDLNMHCVITEIKAQYDDIATRSRAEAESWYRSKCEEMKATVIRHGETLRRTKEEINELNRMIQRLTAEVENAKCQNSKLEAAVAQSEQQGEAALSDARCKLAELEGALQKAKQDMACLIREYQEVMNSKLAWTLRSPPTGACWRARSRGCVRALVL.

An IF rod domain is found at 1 to 255; it reads MEANSGRLAS…SRGCVRALVL (255 aa). 2 coiled-coil regions span residues 19–81 and 147–227; these read LEGY…EIRV and LRRT…VMNS.

It belongs to the intermediate filament family. As to quaternary structure, heterotetramer of two type I and two type II keratins.

In Homo sapiens (Human), this protein is Putative keratin-87 protein (KRT87P).